Reading from the N-terminus, the 302-residue chain is Lysosomal thioesterase PPT2 (302 aa).

The N-terminal stretch at 1–27 (MPGLWRQRLPSAWALLLLPFLPLLMPA) is a signal peptide. Residue N60 is glycosylated (N-linked (GlcNAc...) asparagine). Intrachain disulfides connect C109/C117 and C165/C176. The Nucleophile role is filled by S111. N-linked (GlcNAc...) asparagine glycans are attached at residues N190 and N206. The active site involves D228. A glycan (N-linked (GlcNAc...) asparagine) is linked at N245. An intrachain disulfide couples C276 to C296. H283 is an active-site residue. N-linked (GlcNAc...) asparagine glycosylation occurs at N289.

This sequence belongs to the palmitoyl-protein thioesterase family. In terms of tissue distribution, expressed throughout the brain, primarily in neurons, and at lower levels in glial cells.

Its subcellular location is the lysosome. It carries out the reaction hexadecanoyl-CoA + H2O = hexadecanoate + CoA + H(+). The enzyme catalyses S-hexadecanoyl-N-acetylcysteamine + H2O = N-acetylcysteamine + hexadecanoate + H(+). Functionally, catalyzes the cleavage of thioester bonds from S-palmitoyl-CoA or S-palmitoyl-N-acetylcysteamine (unbranched structures) but does not have activity against palmitoylcysteine or palmitoylated proteins, branched structures or bulky head groups. Conversely, hydrolyzes both long and short chain fatty acyl-CoA substrate. The sequence is that of Lysosomal thioesterase PPT2 (Ppt2) from Mus musculus (Mouse).